Here is a 6298-residue protein sequence, read N- to C-terminus: Adhesion G-protein coupled receptor V1 (6298 aa).

The signal sequence occupies residues 1–28 (MSVTSEPGMISSFLLVYLSTLFISFVFG). Calx-beta domains lie at 29–116 (EAEI…FHLT), 132–236 (ASVT…IQLR), 251–362 (VEII…IMLL), 389–489 (YGVL…LTIL), 646–746 (PAIA…TLSL), 764–862 (DLII…VILS), 877–980 (VNIT…IILL), 994–1094 (ASLR…IVLF), 1108–1208 (ATVI…LRLV), 1440–1540 (AMPR…FLLK), 1562–1662 (QKSD…VTLV), 1706–1805 (TGLP…VELL), 1846–1948 (ILVT…VSIL), 1962–2075 (TLTI…IELF), 2103–2202 (HLVI…VQLL), 2218–2320 (VITI…VQLA), 2437–2537 (TLCL…FLIS), 2576–2672 (FIIY…VRLG), 2687–2786 (VTVN…VVLY), 2810–2921 (LTVE…VNLT), 2945–3044 (QIVI…LLLT), and 3067–3167 (DGPG…VCTL). Residues 29-5901 (EAEIRFTGQT…TDNSSSYNEA (5873 aa)) lie on the Extracellular side of the membrane. EAR repeat units follow at residues 3251–3292 (VFSI…RWQG), 3293–3341 (TFVP…MLTA), 3344–3389 (RLVL…RWNG), 3391–3435 (NFAW…TWSG), 3437–3484 (QFIN…VWEM), and 3488–3530 (SLRY…CWNS). 13 Calx-beta domains span residues 3581–3622 (QSDF…RVQL), 3636–3736 (SVRV…VVTL), 3772–3872 (GAVR…VTIA), 3919–4003 (GGVI…ISLV), 4017–4120 (VNVV…IELT), 4135–4235 (SVII…EFQL), 4251–4351 (ARIT…LAIT), 4384–4484 (RIII…ILLI), 4507–4607 (SPFG…IVQL), 4628–4728 (KFGD…AVQL), 4989–5089 (TTAE…INLT), 5281–5325 (AVEE…YVFL), and 5361–5461 (IGFS…FVEL). The 157-residue stretch at 5740-5896 (SILALHWNPQ…AVYAQTDNSS (157 aa)) folds into the GAIN-B domain. Intrachain disulfides connect C5849-C5878 and C5866-C5880. Residues 5849-5896 (CLLWNQAAASWLSDSQFCKVVEDASDYVECACSHMSVYAVYAQTDNSS) form a GPS region. A helical transmembrane segment spans residues 5902-5922 (FFSAGLICISGLCLAVVSHMF). The Cytoplasmic segment spans residues 5923–5932 (CARHSMFAAK). Residues 5933-5953 (LLTHMMVASLGTQILFLASAY) form a helical membrane-spanning segment. The Extracellular portion of the chain corresponds to 5954–5973 (ASPHLSEESCSAVAAVAHYL). A helical transmembrane segment spans residues 5974–5994 (YLCQFSWMLIQSVNFWYVLVV). Topologically, residues 5995–6003 (SDEHTERRC) are cytoplasmic. Residues 6004 to 6024 (LLFCLLSWGLPSFVVILLILI) traverse the membrane as a helical segment. The Extracellular segment spans residues 6025-6052 (LRGIYHRSMPQIYGLIHGDLCFIPNIYA). The helical transmembrane segment at 6053–6073 (ALFTAALVPLMCLVVVFVVFI) threads the bilayer. Topologically, residues 6074 to 6097 (HAYQLKPQWKGYDDVFRGRTNAAE) are cytoplasmic. The chain crosses the membrane as a helical span at residues 6098 to 6118 (IPLILYLFALISMTWLWGGLH). At 6119–6126 (MAYGHFWM) the chain is on the extracellular side. Residues 6127 to 6147 (LVLFVIFNSLQGLYVFVVYFI) form a helical membrane-spanning segment. The Cytoplasmic portion of the chain corresponds to 6148-6298 (LHNQTCCPMK…RRIPIADTHL (151 aa)). Disordered stretches follow at residues 6206-6242 (ERSS…GSLI) and 6264-6283 (SVSD…LTDS). 2 stretches are compositionally biased toward polar residues: residues 6208–6226 (SSFQ…SPQN) and 6265–6283 (VSDN…LTDS).

The protein belongs to the G-protein coupled receptor 2 family. Adhesion G-protein coupled receptor (ADGR) subfamily. As to quaternary structure, forms a heterodimer, consisting of a large extracellular region (alpha subunit) non-covalently linked to a seven-transmembrane moiety (beta subunit). Interacts (via the cytoplasmic region) with PDZD7. Component of USH2 complex, composed of ADGRV1, PDZD7, USH2A and WHRN. Interacts with USH2A and WHRN. Interacts (via the cytoplasmic region) with MYO7A (via MyTH4-FERM domains). In terms of processing, autoproteolytically cleaved into 2 subunits, an extracellular alpha subunit and a seven-transmembrane subunit. In terms of tissue distribution, expressed by oligodendrocytes. In midbrain, enriched in the myelinated regions of the superior and inferior colliculi. In the cochlea, expressed in developing hair cells. Expressed by photoreceptors in the retina.

The protein resides in the cell membrane. Its subcellular location is the cell projection. It localises to the stereocilium membrane. It is found in the photoreceptor inner segment. The protein localises to the secreted. G-protein coupled receptor which has an essential role in the development of hearing and vision. Couples to G-alpha(i)-proteins, GNAI1/2/3, G-alpha(q)-proteins, GNAQ, as well as G-alpha(s)-proteins, GNAS, inhibiting adenylate cyclase (AC) activity and cAMP production. Required for the hair bundle ankle formation, which connects growing stereocilia in developing cochlear hair cells of the inner ear. In response to extracellular calcium, activates kinases PKA and PKC to regulate myelination by inhibiting the ubiquitination of MAG, thus enhancing the stability of this protein in myelin-forming cells of the auditory pathway. In retina photoreceptors, the USH2 complex is required for the maintenance of periciliary membrane complex that seems to play a role in regulating intracellular protein transport. Involved in the regulation of bone metabolism. In terms of biological role, cleaved ADGRV1 beta-subunit couples with G-alpha(i)-proteins, GNAI1/2/3, and constitutively inhibits adenylate cyclase (AC) activity with a stronger effect than full ADGRV1. The protein is Adhesion G-protein coupled receptor V1 of Mus musculus (Mouse).